The following is a 103-amino-acid chain: MRLKESIIFIGVFSFIVGIFLSLIAVTSHNDPNQYVKIEVQSGDTLWGLADQVNDSKSIDKNAFIDWVTQHNDLASTEIQPGDILVIPVKKEHPFVYQLATVQ.

The 52-residue stretch at 36 to 87 (VKIEVQSGDTLWGLADQVNDSKSIDKNAFIDWVTQHNDLASTEIQPGDILVI) folds into the LysM domain.

This sequence belongs to the YneA family.

Its subcellular location is the cytoplasm. Functionally, inhibits cell division during the SOS response. Affects a later stage of the cell division protein assembly, after the assembly of the Z ring, by probably suppressing recruitment of FtsL and/or DivIC to the division machinery. The polypeptide is Cell division suppressor protein YneA (Bacillus pumilus (strain SAFR-032)).